The following is a 373-amino-acid chain: RNA 3'-terminal phosphate cyclase-like protein (373 aa).

Belongs to the RNA 3'-terminal cyclase family. Type 2 subfamily. Part of the small subunit (SSU) processome, composed of more than 70 proteins and the RNA chaperone small nucleolar RNA (snoRNA) U3. Interacts with BMS1.

It is found in the nucleus. The protein localises to the nucleolus. In terms of biological role, as part of the small subunit (SSU) processome, it plays a role in 40S-ribosomal-subunit biogenesis in the early pre-rRNA processing steps at sites A0, A1 and A2 that are required for proper maturation of the 18S RNA. Activates BMS1 by promoting GDP/GTP exchange. Does not have cyclase activity. The sequence is that of RNA 3'-terminal phosphate cyclase-like protein (Rcl1) from Mus musculus (Mouse).